A 343-amino-acid polypeptide reads, in one-letter code: MAKRQLNRRQNWRIEKIQGERAARAAKRESRAVEALEGGDLGPEQTGLVIAHFGVQVEIEGLQGELAGQVFRCHLRANLPALVTGDQVVWRPGNQGDGVIVAQLPRSSELCRPDMRGQLKPVAANVDQIVIVFAPLPEPHANLIDRYLVAAEHAGIRPLLLLNKADLIDEQNQVALEALLKVYRQLGYPLLEVSAHQGDGMEQLKKRLDGHVSVFVGQSGVGKSSLVNGLLPGVDTRVGALSELTGKGTHTTTTARLFHFPGGGQLIDSPGIREFGLGHVSRDDVEAGFIEFHDLLGRCRFRDCKHDREPGCALLQALEDGRIQAQRMASYRHILASLPEDDY.

Positions arginine 116 to phenylalanine 275 constitute a CP-type G domain. GTP contacts are provided by residues asparagine 163 to aspartate 166 and glycine 217 to serine 225. Zn(2+) contacts are provided by cysteine 299, cysteine 304, histidine 306, and cysteine 312.

This sequence belongs to the TRAFAC class YlqF/YawG GTPase family. RsgA subfamily. In terms of assembly, monomer. Associates with 30S ribosomal subunit, binds 16S rRNA. Requires Zn(2+) as cofactor.

It localises to the cytoplasm. Its function is as follows. One of several proteins that assist in the late maturation steps of the functional core of the 30S ribosomal subunit. Helps release RbfA from mature subunits. May play a role in the assembly of ribosomal proteins into the subunit. Circularly permuted GTPase that catalyzes slow GTP hydrolysis, GTPase activity is stimulated by the 30S ribosomal subunit. The protein is Small ribosomal subunit biogenesis GTPase RsgA of Ectopseudomonas mendocina (strain ymp) (Pseudomonas mendocina).